The chain runs to 465 residues: Glutamate--tRNA ligase (465 aa).

A 'HIGH' region motif is present at residues 5 to 15; that stretch reads PSPTGMFHVGG. Residues C96, C98, C118, and D120 each coordinate Zn(2+). Positions 228–232 match the 'KMSKS' region motif; the sequence is KLSKR. K231 is a binding site for ATP.

Belongs to the class-I aminoacyl-tRNA synthetase family. Glutamate--tRNA ligase type 1 subfamily. As to quaternary structure, monomer. The cofactor is Zn(2+).

The protein localises to the cytoplasm. The catalysed reaction is tRNA(Glu) + L-glutamate + ATP = L-glutamyl-tRNA(Glu) + AMP + diphosphate. Functionally, catalyzes the attachment of glutamate to tRNA(Glu) in a two-step reaction: glutamate is first activated by ATP to form Glu-AMP and then transferred to the acceptor end of tRNA(Glu). The chain is Glutamate--tRNA ligase from Salinispora tropica (strain ATCC BAA-916 / DSM 44818 / JCM 13857 / NBRC 105044 / CNB-440).